The following is a 108-amino-acid chain: Abdominal ganglion neuropeptide R3-14 (108 aa).

A signal peptide spans methionine 1 to serine 23. 2 positions are modified to pyrrolidone carboxylic acid (Glu); partial: glutamate 24 and glutamate 52. Glutamine 66 carries the post-translational modification Pyrrolidone carboxylic acid.

Post-translationally, the partial formation of pyroglutamate from N-terminal glutamic acid in peptides isolated from single cells is detected by mass spectrometry. There are indications this modification depends on a heat sensitive factor. As to expression, neurons R3-R14. A cluster of 12 giant neurons located on the right side of the abdominal ganglion.

Its subcellular location is the secreted. HRBP is a myoactive peptide that excites Aplysia heart and enhances gut motility in vitro. The sequence is that of Abdominal ganglion neuropeptide R3-14 from Aplysia californica (California sea hare).